Reading from the N-terminus, the 345-residue chain is Magnesium-chelatase 38 kDa subunit (345 aa).

Residue 35–42 (GDRGTGKS) coordinates ATP.

It belongs to the Mg-chelatase subunits D/I family.

It carries out the reaction protoporphyrin IX + Mg(2+) + ATP + H2O = Mg-protoporphyrin IX + ADP + phosphate + 3 H(+). Its pathway is porphyrin-containing compound metabolism; bacteriochlorophyll biosynthesis. Involved in bacteriochlorophyll biosynthesis; introduces a magnesium ion into protoporphyrin IX to yield Mg-protoporphyrin IX. The sequence is that of Magnesium-chelatase 38 kDa subunit (bchI) from Acidiphilium rubrum.